A 521-amino-acid polypeptide reads, in one-letter code: Tigger transposable element-derived protein 6 (521 aa).

Residues 3–54 (NKGNKKRRQFSLEEKMKVVGAVDSGKRKGDVAKEFGITPSTLSTFLKDRTKF) form the HTH psq-type domain. 2 consecutive DNA-binding regions (H-T-H motif) follow at residues 30–50 (KGDV…FLKD) and 99–130 (SVIR…FRDR). The 72-residue stretch at 66–137 (QRKRMRSALY…RDRHGIALKA (72 aa)) folds into the HTH CENPB-type domain. The DDE-1 domain occupies 170 to 372 (YSPDDIFNAD…VKPSTVVKCW (203 aa)).

Belongs to the tigger transposable element derived protein family.

It is found in the nucleus. This is Tigger transposable element-derived protein 6 (TIGD6) from Homo sapiens (Human).